Reading from the N-terminus, the 1479-residue chain is Chromosome partition protein MukB (1479 aa).

Residue 34–41 (GGNGAGKS) participates in ATP binding. Coiled coils occupy residues 337–418 (LNLV…QYQQ), 511–604 (QAER…APVW), 780–810 (RAAR…DVQK), 847–1116 (ELDR…AKAG), and 1206–1265 (DDPV…LQAV). A flexible hinge region spans residues 666–783 (PGGSEDPRLN…EVPLFGRAAR (118 aa)).

It belongs to the SMC family. MukB subfamily. As to quaternary structure, homodimerization via its hinge domain. Binds to DNA via its C-terminal region. Interacts, and probably forms a ternary complex, with MukE and MukF via its C-terminal region. The complex formation is stimulated by calcium or magnesium. Interacts with tubulin-related protein FtsZ.

It is found in the cytoplasm. The protein localises to the nucleoid. Its function is as follows. Plays a central role in chromosome condensation, segregation and cell cycle progression. Functions as a homodimer, which is essential for chromosome partition. Involved in negative DNA supercoiling in vivo, and by this means organize and compact chromosomes. May achieve or facilitate chromosome segregation by condensation DNA from both sides of a centrally located replisome during cell division. The chain is Chromosome partition protein MukB from Pectobacterium atrosepticum (strain SCRI 1043 / ATCC BAA-672) (Erwinia carotovora subsp. atroseptica).